A 290-amino-acid chain; its full sequence is O-methyltransferase agiB (290 aa).

Asp-155 lines the S-adenosyl-L-methionine pocket. The active-site Proton acceptor is His-194.

This sequence belongs to the class I-like SAM-binding methyltransferase superfamily. Cation-independent O-methyltransferase family.

Its pathway is secondary metabolite biosynthesis. In terms of biological role, O-methyltransferase; part of the gene cluster that mediates the biosynthesis of the aspergillicins A and F, 2 cryptic cyclic hexa-depsipeptides. The hexamodular NRPS agiA catalyzes the condensation of the six amino acid residues including N-Me-L-O-Me-tyrosine, L-proline 1, L-proline 2, D-isoleucine, O-acetyl-threonine, and L-isoleucine. The starting condensation domain (C1) of agiA probably loads acetyl-CoA which is condensed on the N-terminus of threonine by the first module to yield O-acetyl-threonine. The second module then loads L-isoleucine. The epimerase (E) domain on module 2 is probably involved in the formation of the D-isoleucine moiety. Modules 3 and 4 further load 2 successive L-prolines. Module 5 is then involved in the condensation of O-Me-L-tyrosine produced by the O-methyltransferase agiB and the N-methyl transferase (NMeT) domain on module 5 probably catalyzes the N-methylation to yield the N-Me-L-O-Me-tyrosine moiety. The A domain of module 5 loads preferentially O-Me-L-tyrosine, but it can also accept L-phenylalanine, which leads to the production of aspergillicin G. Module 6 then loads the last residue, L-isoleucine. The C-terminal thiolesterase (TE) domain probably cyclizes the peptide using the hydroxy group from threonine to form the cyclic depsipeptide. This Aspergillus flavus (strain ATCC 200026 / FGSC A1120 / IAM 13836 / NRRL 3357 / JCM 12722 / SRRC 167) protein is O-methyltransferase agiB.